A 346-amino-acid polypeptide reads, in one-letter code: tRNA N6-adenosine threonylcarbamoyltransferase (346 aa).

The Fe cation site is built by His-111 and His-115. Residues 134 to 138 (LVSGG), Asp-167, Gly-180, and Asn-279 each bind substrate. Residue Asp-307 participates in Fe cation binding.

The protein belongs to the KAE1 / TsaD family. It depends on Fe(2+) as a cofactor.

It localises to the cytoplasm. It carries out the reaction L-threonylcarbamoyladenylate + adenosine(37) in tRNA = N(6)-L-threonylcarbamoyladenosine(37) in tRNA + AMP + H(+). Its function is as follows. Required for the formation of a threonylcarbamoyl group on adenosine at position 37 (t(6)A37) in tRNAs that read codons beginning with adenine. Is involved in the transfer of the threonylcarbamoyl moiety of threonylcarbamoyl-AMP (TC-AMP) to the N6 group of A37, together with TsaE and TsaB. TsaD likely plays a direct catalytic role in this reaction. This Burkholderia cenocepacia (strain ATCC BAA-245 / DSM 16553 / LMG 16656 / NCTC 13227 / J2315 / CF5610) (Burkholderia cepacia (strain J2315)) protein is tRNA N6-adenosine threonylcarbamoyltransferase.